The chain runs to 451 residues: Vacuolar cation/proton exchanger 1a (451 aa).

The Cytoplasmic segment spans residues 1 to 58 (MEAAAAMEAGRKLAARHPHGRSRTAHNMSSSSLRKKSDAALVRKVPVAPLRPLLANLQ). Residues 9–37 (AGRKLAARHPHGRSRTAHNMSSSSLRKKS) are disordered. Residues 13–24 (LAARHPHGRSRT) are compositionally biased toward basic residues. Residues 59–79 (EVFLATKLAVLFPAVPLAIAA) traverse the membrane as a helical segment. Residues 80 to 86 (QCFRFDQ) lie on the Vacuolar side of the membrane. The helical transmembrane segment at 87–107 (VWVFALSLLGLIPLAERVSFL) threads the bilayer. At 108 to 120 (TEQIALYTGPTVG) the chain is on the cytoplasmic side. Residues 121-141 (GLLNATCGNATELIIALFALL) traverse the membrane as a helical segment. The tract at residues 128 to 163 (GNATELIIALFALLKGKIEVVKCSLLGSVLSNLLLV) is cation selection. Topologically, residues 142-153 (KGKIEVVKCSLL) are vacuolar. A helical membrane pass occupies residues 154-174 (GSVLSNLLLVLGTSLFCGGVV). Residues 175 to 191 (NLGARQPYDRNQSDVST) lie on the Cytoplasmic side of the membrane. Residues 192–212 (ALLFLAVLCHSAPLLLRYAVA) traverse the membrane as a helical segment. The Vacuolar segment spans residues 213-228 (AGEHSVSATSAAASLD). A helical membrane pass occupies residues 229-249 (LSRACSFVMLASYVAYLFFQL). The Cytoplasmic segment spans residues 250-273 (KTHRQLFEPQEVDGGDAGDDDEEP). The helical transmembrane segment at 274 to 294 (ALGFASALFWLALMTAVISVL) threads the bilayer. Over 295 to 317 (SEYVVGTIEPTSQSWGLSVSFIS) the chain is Vacuolar. A helical transmembrane segment spans residues 318 to 338 (IILLPIVGNAAEHAGAIIFAL). A cation selection region spans residues 325 to 360 (GNAAEHAGAIIFALKNKLDITLGVALGSATQISMFV). The Cytoplasmic portion of the chain corresponds to 339–352 (KNKLDITLGVALGS). The helical transmembrane segment at 353–373 (ATQISMFVVPLSVLVAWIMGV) threads the bilayer. Over 374-378 (QMDLD) the chain is Vacuolar. The chain crosses the membrane as a helical span at residues 379–399 (FKLLETGSLFMAVLVTAFTLQ). Residues 400–404 (DGTSH) are Cytoplasmic-facing. The helical transmembrane segment at 405–425 (YLKGILLLLCYIVIGACFFVA) threads the bilayer. Topologically, residues 426–451 (RQPAGHANSNGALLDVPTGSMSVQAA) are vacuolar.

This sequence belongs to the Ca(2+):cation antiporter (CaCA) (TC 2.A.19) family. Cation/proton exchanger (CAX) subfamily. In terms of tissue distribution, ubiquitous.

The protein localises to the vacuole membrane. Its function is as follows. Vacuolar cation/proton exchanger (CAX). Translocates Ca(2+) and other metal ions into vacuoles using the proton gradient formed by H(+)-ATPase and H(+)-pyrophosphatase. This chain is Vacuolar cation/proton exchanger 1a (CAX1a), found in Oryza sativa subsp. japonica (Rice).